The chain runs to 274 residues: Large ribosomal subunit protein uL2 (274 aa).

The tract at residues 221-256 (RGTAMNPVDHPHGGGEGRNFGKHPVTPWGVPTKGYK) is disordered.

It belongs to the universal ribosomal protein uL2 family. In terms of assembly, part of the 50S ribosomal subunit. Forms a bridge to the 30S subunit in the 70S ribosome.

Functionally, one of the primary rRNA binding proteins. Required for association of the 30S and 50S subunits to form the 70S ribosome, for tRNA binding and peptide bond formation. It has been suggested to have peptidyltransferase activity; this is somewhat controversial. Makes several contacts with the 16S rRNA in the 70S ribosome. This Thioalkalivibrio sulfidiphilus (strain HL-EbGR7) protein is Large ribosomal subunit protein uL2.